Here is a 607-residue protein sequence, read N- to C-terminus: Guanine nucleotide-binding protein-like 1 (607 aa).

Residues 1–14 (MPRKKPFSVKQKKK) show a composition bias toward basic residues. Residues 1–81 (MPRKKPFSVK…GPRGYDPNRY (81 aa)) form a disordered region. Over residues 15 to 26 (QLQDKRERKRGL) the composition is skewed to basic and acidic residues. Phosphoserine is present on residues Ser-32, Ser-33, and Ser-34. Thr-48 and Thr-50 each carry phosphothreonine. A phosphoserine mark is found at Ser-51 and Ser-68. Positions 178–418 (WRQLWRVLEM…LCDCPGLIFP (241 aa)) constitute a CP-type G domain. 225–228 (NKVD) contacts GTP. A Phosphoserine modification is found at Ser-324. GTP-binding positions include 367 to 374 (GFPNVGKS) and 411 to 415 (DCPGL). The interval 544 to 607 (GRVGPAGDEE…PYALLGEGEC (64 aa)) is disordered. Acidic residues predominate over residues 550 to 585 (GDEEEEEEEELSSSCEEEGEEDRDADEEGEGDEDTP). Phosphoserine occurs at positions 561, 562, and 563.

This sequence belongs to the TRAFAC class YlqF/YawG GTPase family.

Functionally, possible regulatory or functional link with the histocompatibility cluster. In Rattus norvegicus (Rat), this protein is Guanine nucleotide-binding protein-like 1 (Gnl1).